The chain runs to 760 residues: Heat shock transcription factor (760 aa).

2 disordered regions span residues Met-1–Val-132 and Phe-206–Thr-276. Composition is skewed to polar residues over residues Thr-19–Ser-31 and Arg-38–Leu-88. Basic and acidic residues predominate over residues Asp-119 to Pro-130. Residues Ala-221–Ser-247 are compositionally biased toward low complexity. Residues Thr-276–Asn-385 mediate DNA binding. An involved in trimerization region spans residues Glu-414 to Val-467. Disordered stretches follow at residues Thr-492 to Asn-545, Leu-560 to Ile-582, His-609 to Ser-630, and Gln-674 to His-760. Residues Asn-515 to Thr-539 are compositionally biased toward polar residues. A Phosphoserine modification is found at Ser-570. Position 574 is a phosphothreonine (Thr-574). Ser-576 carries the phosphoserine modification. At Thr-577 the chain carries Phosphothreonine. Positions Ala-613–Ala-628 are enriched in low complexity. Residues Arg-646 to Gln-684 are a coiled coil. 2 stretches are compositionally biased toward polar residues: residues Ala-701 to Phe-722 and Pro-731 to Ser-742. Basic and acidic residues predominate over residues Gly-744 to His-760.

It belongs to the HSF family. Homotrimer. Homotrimerization increases the affinity of HSF1 to DNA. Interacts with HSP90. In terms of processing, activated by phosphorylation of at least Ser-570, Thr-574, Ser-576 and Thr-577 in response to heat shock. Additional unidentified residues are also phosphorylated in response to heat shock.

It localises to the nucleus. DNA-binding transcription factor that specifically binds heat shock promoter elements (HSE) and activates transcription. With HSP90, is required for the modulation of the chaperone levels in response to growth temperature, rather than the activation of acute responses to sudden thermal transitions. Activated during infection and contributes to full virulence. In Candida albicans (strain SC5314 / ATCC MYA-2876) (Yeast), this protein is Heat shock transcription factor.